Here is a 335-residue protein sequence, read N- to C-terminus: Histidinol-phosphate aminotransferase (335 aa).

Lysine 202 is subject to N6-(pyridoxal phosphate)lysine.

It belongs to the class-II pyridoxal-phosphate-dependent aminotransferase family. Histidinol-phosphate aminotransferase subfamily. As to quaternary structure, homodimer. It depends on pyridoxal 5'-phosphate as a cofactor.

The enzyme catalyses L-histidinol phosphate + 2-oxoglutarate = 3-(imidazol-4-yl)-2-oxopropyl phosphate + L-glutamate. It functions in the pathway amino-acid biosynthesis; L-histidine biosynthesis; L-histidine from 5-phospho-alpha-D-ribose 1-diphosphate: step 7/9. The protein is Histidinol-phosphate aminotransferase of Thermotoga neapolitana (strain ATCC 49049 / DSM 4359 / NBRC 107923 / NS-E).